The primary structure comprises 276 residues: Urease accessory protein UreD (276 aa).

It belongs to the UreD family. As to quaternary structure, ureD, UreF and UreG form a complex that acts as a GTP-hydrolysis-dependent molecular chaperone, activating the urease apoprotein by helping to assemble the nickel containing metallocenter of UreC. The UreE protein probably delivers the nickel.

It is found in the cytoplasm. Required for maturation of urease via the functional incorporation of the urease nickel metallocenter. This chain is Urease accessory protein UreD, found in Polaromonas sp. (strain JS666 / ATCC BAA-500).